The sequence spans 375 residues: Chaperone protein DnaJ 1 (375 aa).

The J domain maps to 4–68; the sequence is DYYAILGVER…EKRRIVDMGG (65 aa). The CR-type zinc-finger motif lies at 127–209; that stretch reads GTKKPITIDT…CGGDGRVRTQ (83 aa). 8 residues coordinate Zn(2+): C140, C143, C157, C160, C183, C186, C197, and C200. 4 CXXCXGXG motif repeats span residues 140–147, 157–164, 183–190, and 197–204; these read CDRCEGTG, CSTCNGSG, CPTCRGTG, and CDKCGGDG.

This sequence belongs to the DnaJ family. In terms of assembly, homodimer. Zn(2+) serves as cofactor.

Its subcellular location is the cytoplasm. Its function is as follows. Participates actively in the response to hyperosmotic and heat shock by preventing the aggregation of stress-denatured proteins and by disaggregating proteins, also in an autonomous, DnaK-independent fashion. Unfolded proteins bind initially to DnaJ; upon interaction with the DnaJ-bound protein, DnaK hydrolyzes its bound ATP, resulting in the formation of a stable complex. GrpE releases ADP from DnaK; ATP binding to DnaK triggers the release of the substrate protein, thus completing the reaction cycle. Several rounds of ATP-dependent interactions between DnaJ, DnaK and GrpE are required for fully efficient folding. Also involved, together with DnaK and GrpE, in the DNA replication of plasmids through activation of initiation proteins. The chain is Chaperone protein DnaJ 1 from Corynebacterium diphtheriae (strain ATCC 700971 / NCTC 13129 / Biotype gravis).